We begin with the raw amino-acid sequence, 781 residues long: MSSGGAGEYNEDRHLLRSTDGDEVGIGGGEGDLDVESQSPAIRSGAGGVRDLFKHIDRRFSLSGRRLSFKRMENIRVDRERHNPSSSSAFSAAGEEDGGGISNLHSVDDRNDEYGFDEEVLGDSAPPEWALLLIGCLIGVAAGICVAGFNKGVHVIHEWAWAGTPNEGAAWLRLQRLADTWHRILLIPVTGGVIVGMMHGLLEILDQIRQSNSSQRQGLDFLAGIYPVIKAIQAAVTLGTGCSLGPEGPSVDIGKSCANGFALMMENNRERRIALTAAGAASGIASGFNAAVAGCFFAIETVLRPLRAENSPPFTTAMIILASVISSTVSNALLGTQSAFTVPSYDLKSAAELPLYLILGMLCGAVSVVFSRLVTWFTKSFDFIKDKFGLPAIVCPALGGLGAGIIALKYPGILYWGFTNVEEILHTGKSASAPGIWLLAQLAAAKVVATALCKGSGLVGGLYAPSLMIGAAVGAVFGGSAAEIINRAIPGNAAVAQPQAYALVGMAATLASMCSVPLTSVLLLFELTKDYRILLPLMGAVGLAIWVPSVANQGKESDSSEGRSTGRGYSSLSPSERKTEGVWRHTDNADSLELTVIENPDHNSFLDEETILEDLKVMRVMSKNYVKVSSGTTLREARNILKESHQNCIMVVDDDDFLAGILTHGDIRRYLSNNASTILDENTCPVSSVCTKKISYRGQERGLLTCYPDATVGVAKELMEARGVKQLPVVKRGEVIHKGKRRKLLGLLHYDSIWTFLRDEMSRRRSINDRRKDKEVGTNGH.

Disordered stretches follow at residues 1–41 and 79–98; these read MSSG…QSPA and RERHNPSSSSAFSAAGEEDG. Positions 10-20 are enriched in basic and acidic residues; that stretch reads NEDRHLLRSTD. Helical transmembrane passes span 129–149, 184–204, 221–241, 250–270, 279–299, 314–334, 350–370, 388–408, 433–453, 457–477, 502–522, and 523–543; these read WALLLIGCLIGVAAGICVAGF, ILLIPVTGGVIVGMMHGLLEI, FLAGIYPVIKAIQAAVTLGTG, SVDIGKSCANGFALMMENNRE, GAASGIASGFNAAVAGCFFAI, FTTAMIILASVISSTVSNALL, AAELPLYLILGMLCGAVSVVF, FGLPAIVCPALGGLGAGIIAL, APGIWLLAQLAAAKVVATALC, GLVGGLYAPSLMIGAAVGAVF, ALVGMAATLASMCSVPLTSVL, and LLFELTKDYRILLPLMGAVGL. Residues 553–584 are disordered; that stretch reads QGKESDSSEGRSTGRGYSSLSPSERKTEGVWR. Positions 575–584 are enriched in basic and acidic residues; that stretch reads SERKTEGVWR. CBS domains are found at residues 621 to 677 and 699 to 763; these read MSKN…NAST and QERG…EMSR. Residues 726-746 form a helical membrane-spanning segment; it reads QLPVVKRGEVIHKGKRRKLLG.

This sequence belongs to the chloride channel (TC 2.A.49) family. Homodimer.

Its subcellular location is the membrane. Voltage-gated chloride channel. The polypeptide is Chloride channel protein CLC-f (CLC-F) (Arabidopsis thaliana (Mouse-ear cress)).